The primary structure comprises 440 residues: Glutamyl-tRNA reductase (440 aa).

Substrate is bound by residues 55–58 (TCNR), serine 115, 120–122 (ETQ), and glutamine 126. The Nucleophile role is filled by cysteine 56. Residue 199–204 (GSGEMG) coordinates NADP(+).

This sequence belongs to the glutamyl-tRNA reductase family. In terms of assembly, homodimer.

The enzyme catalyses (S)-4-amino-5-oxopentanoate + tRNA(Glu) + NADP(+) = L-glutamyl-tRNA(Glu) + NADPH + H(+). It participates in porphyrin-containing compound metabolism; protoporphyrin-IX biosynthesis; 5-aminolevulinate from L-glutamyl-tRNA(Glu): step 1/2. Functionally, catalyzes the NADPH-dependent reduction of glutamyl-tRNA(Glu) to glutamate 1-semialdehyde (GSA). The protein is Glutamyl-tRNA reductase of Helicobacter hepaticus (strain ATCC 51449 / 3B1).